The chain runs to 101 residues: Hg-scorpine-like-2 (101 aa).

An N-terminal signal peptide occupies residues 1–17; that stretch reads MKLTILILLVITSFCSC. One can recognise a BetaSPN-type CS-alpha/beta domain in the interval 60–100; that stretch reads QQLCMFNKDVAGWCEKSCQQSAHQKGYCHGTKCKCGIPLNY. Intrachain disulfides connect Cys63/Cys87, Cys73/Cys92, and Cys77/Cys94.

Belongs to the long chain scorpion toxin family. Class 3 subfamily. In terms of tissue distribution, expressed by the venom gland.

It localises to the secreted. In terms of biological role, inhibits voltage-gated potassium channels. In Hoffmannihadrurus gertschi (Scorpion), this protein is Hg-scorpine-like-2.